The following is a 417-amino-acid chain: MDKQQSRVLNLLFQGSLVKQILAGLIAGILLAWLAPEVAKMMSLLGNLFISALKAVAPVLVWVLVMASIANHRQGQKTSIRPILVLYLLATFFAALTAVVASFVFPSVLTLVVNDSQLSPPENIAEVLKGVLINVVANPVDALINGNYMGILAWAIGLGLALRHASDTTKALTQDFADAVTNLVRVVIRLAPIGIFGLVSSTIATTGFKALAGYLHVLLVLIGCMLFVALVVNPLIVFWKIRRNPYPLVWACLRESGVTAFFTRSSAANIPVNMAMCRRMNLNEDTYSVSIPLGATINMGGAAITITILTLAAVNTLGMPVDIPTALLLSLVAAICACGASGVAGGSLLLIPLACSMFGISNDLAMQVVAVGVMIGVLQDSAETALNSSTDVLFTATVCIAEDERLVANPLTEKNNG.

Transmembrane regions (helical) follow at residues 21 to 41 (ILAG…VAKM), 49 to 69 (FISA…MASI), 83 to 103 (ILVL…VASF), 142 to 162 (ALIN…GLAL), 193 to 213 (IGIF…ALAG), 218 to 238 (LLVL…LIVF), 291 to 311 (IPLG…ILTL), and 331 to 351 (LVAA…LLLI).

It belongs to the dicarboxylate/amino acid:cation symporter (DAACS) (TC 2.A.23) family.

It localises to the cell inner membrane. It catalyses the reaction L-serine(in) + Na(+)(in) = L-serine(out) + Na(+)(out). The catalysed reaction is L-threonine(in) + Na(+)(in) = L-threonine(out) + Na(+)(out). Its function is as follows. Involved in the import of serine and threonine into the cell, with the concomitant import of sodium (symport system). The protein is Serine/threonine transporter SstT of Proteus mirabilis (strain HI4320).